Here is a 133-residue protein sequence, read N- to C-terminus: Mediator of RNA polymerase II transcription subunit 10 (133 aa).

Belongs to the Mediator complex subunit 10 family. Component of the Mediator complex. Interacts with MED4 and MED21.

Its subcellular location is the nucleus. Functionally, component of the Mediator complex, a coactivator involved in the regulated transcription of nearly all RNA polymerase II-dependent genes. Mediator functions as a bridge to convey information from gene-specific regulatory proteins to the basal RNA polymerase II transcription machinery. Mediator is recruited to promoters by direct interactions with regulatory proteins and serves as a scaffold for the assembly of a functional preinitiation complex with RNA polymerase II and the general transcription factors. Required for activated transcription of the MtnA, MtnB and MtnD genes. This Drosophila melanogaster (Fruit fly) protein is Mediator of RNA polymerase II transcription subunit 10 (MED10).